A 34-amino-acid polypeptide reads, in one-letter code: Egg-releasing peptide (34 aa).

This Aplysia californica (California sea hare) protein is Egg-releasing peptide.